The sequence spans 467 residues: Asparagine--tRNA ligase (467 aa).

This sequence belongs to the class-II aminoacyl-tRNA synthetase family. In terms of assembly, homodimer.

It is found in the cytoplasm. It catalyses the reaction tRNA(Asn) + L-asparagine + ATP = L-asparaginyl-tRNA(Asn) + AMP + diphosphate + H(+). This Legionella pneumophila (strain Corby) protein is Asparagine--tRNA ligase.